A 549-amino-acid chain; its full sequence is Probable protein kinase UbiB (549 aa).

In terms of domain architecture, Protein kinase spans 123-501; the sequence is DFDDIPLASA…QQKAHKSNYL (379 aa). ATP-binding positions include 129–137 and K152; that span reads LASASISQV. The Proton acceptor role is filled by D287. 2 helical membrane passes run 498 to 518 and 520 to 540; these read SNYLLITSAILVICGTILINQ and ATLWPSYGSIGTGIALWVLGW.

This sequence belongs to the ABC1 family. UbiB subfamily.

The protein localises to the cell inner membrane. It participates in cofactor biosynthesis; ubiquinone biosynthesis [regulation]. Functionally, is probably a protein kinase regulator of UbiI activity which is involved in aerobic coenzyme Q (ubiquinone) biosynthesis. This Shewanella halifaxensis (strain HAW-EB4) protein is Probable protein kinase UbiB.